A 468-amino-acid polypeptide reads, in one-letter code: MQPRQPGDEAKQLAELEVVRQMMTPTREVLLELHESFLKELQRGLEMHKRHGITWVPEECSMKMLDSCVSNLPTGAEVGEAYAIDFGGSTCRAVRCSLLGKGKMEIIQDKICLRSAEHRCAKGFMDKKAGGKELFDQFAMCIRGLMDRSGDLKKAEETNTPVPVGFTFSFPCAQAALNSSFLIEWTKGFETGRENPDRVEGKDVAVLLADALQRHNVPAVCKAIVNDTVGTLVSCAYQRVPGTPECRVGLIIGTGFNACYVEPEASNYGYTGTVVNMEAGNFHKDLPRNEIDVEVDEKTHNRGKQQFEKLVSGYYIGEIVRVAAVRVFGARAPEKASVRHSIHGETASTIRDDHSQDKAASIQAIKECWGVTMDLDDIKCIWEICRLVFDRSAAFAATLAVALCYRTGRLDTGSTVGIDGALYVKNQWYREAVEYYTKLVAGDAAKNIHYCIADDGSGKGAALIADVN.

The Hexokinase domain maps to 10 to 466 (AKQLAELEVV…SGKGAALIAD (457 aa)). The segment at 74 to 225 (TGAEVGEAYA…NVPAVCKAIV (152 aa)) is hexokinase small subdomain. 85–90 (DFGGST) provides a ligand contact to ATP. The glucose-binding stretch occupies residues 163-189 (PVGFTFSFPCAQAALNSSFLIEWTKGF). Residues 226–455 (NDTVGTLVSC…KNIHYCIADD (230 aa)) are hexokinase large subdomain.

The protein belongs to the hexokinase family.

The catalysed reaction is a D-hexose + ATP = a D-hexose 6-phosphate + ADP + H(+). It catalyses the reaction D-mannose + ATP = D-mannose 6-phosphate + ADP + H(+). The enzyme catalyses D-fructose + ATP = D-fructose 6-phosphate + ADP + H(+). It carries out the reaction D-glucose + ATP = D-glucose 6-phosphate + ADP + H(+). It participates in carbohydrate metabolism; hexose metabolism. Its pathway is carbohydrate degradation; glycolysis; D-glyceraldehyde 3-phosphate and glycerone phosphate from D-glucose: step 1/4. Catalyzes the phosphorylation of various hexoses to hexose 6-phosphate. In Toxoplasma gondii, this protein is Hexokinase (HXK).